The chain runs to 141 residues: Hemoglobin subunit alpha-1 (141 aa).

Residues 1–141 (VLSGSDKNNV…VGNVLTAKYR (141 aa)) form the Globin domain. Residue H58 participates in O2 binding. Position 87 (H87) interacts with heme b.

Belongs to the globin family. As to quaternary structure, heterotetramer of two alpha chains and two beta chains. Red blood cells.

Functionally, involved in oxygen transport from the lung to the various peripheral tissues. The sequence is that of Hemoglobin subunit alpha-1 from Stercorarius maccormicki (South polar skua).